Reading from the N-terminus, the 93-residue chain is MNRPTPNFEAIDKKISAFVTNHDNLLDKLLKQQTELLTSEITTNFEVTQQIQEEVAKKTKQHSKNYKWLVTVVLANGVVSLFLLGGLIYLFSK.

Residues 68-88 (WLVTVVLANGVVSLFLLGGLI) form a helical membrane-spanning segment.

Its subcellular location is the membrane. This is an uncharacterized protein from Mycoplasma pneumoniae (strain ATCC 29342 / M129 / Subtype 1) (Mycoplasmoides pneumoniae).